Here is a 336-residue protein sequence, read N- to C-terminus: Potassium channel subfamily K member 1 (336 aa).

Topologically, residues 1-20 (MLQSLAGSSCVRLVERHRSA) are cytoplasmic. Residues 21–41 (WCFGFLVLGYLLYLVFGAVVF) form a helical membrane-spanning segment. At 42–103 (SSVELPYEDL…SNASGNWNWD (62 aa)) the chain is on the extracellular side. N95 carries an N-linked (GlcNAc...) asparagine glycan. Residues 104-116 (FTSALFFASTVLS) constitute an intramembrane region (helical). Residues 117–122 (TTGYGH) lie within the membrane without spanning it. The interval 117-122 (TTGYGH) is selectivity filter 1. Residues 123-132 (TVPLSDGGKA) lie on the Extracellular side of the membrane. The helical transmembrane segment at 133–156 (FCIIYSVIGIPFTLLFLTAVVQRI) threads the bilayer. Residues 157 to 181 (TVHVTRRPVLYFHIRWGFSKQVVAI) lie on the Cytoplasmic side of the membrane. A helical membrane pass occupies residues 182-202 (VHAVLLGFVTVSCFFFIPAAV). Residues 203–211 (FSVLEDDWN) lie on the Extracellular side of the membrane. An intramembrane region (helical) is located at residues 212-224 (FLESFYFCFISLS). The selectivity filter 2 stretch occupies residues 225–230 (TIGLGD). Residues 225–231 (TIGLGDY) lie within the membrane without spanning it. Over 232–243 (VPGEGYNQKFRE) the chain is Extracellular. A helical transmembrane segment spans residues 244 to 267 (LYKIGITCYLLLGLIAMLVVLETF). Residues 268–336 (CELHELKKFR…SACVDGPANH (69 aa)) are Cytoplasmic-facing. K274 is covalently cross-linked (Glycyl lysine isopeptide (Lys-Gly) (interchain with G-Cter in SUMO)). Positions 293-299 (IIEHDQL) are important for intracellular retention in recycling endosomes. Residue S326 is modified to Phosphoserine.

The protein belongs to the two pore domain potassium channel (TC 1.A.1.8) family. In terms of assembly, homodimer; disulfide-linked. Heterodimer with KCNK2; disulfide-linked. In astrocytes, forms mostly heterodimeric potassium channels with KCNK2, with only a minor proportion of functional channels containing homodimeric KCNK1. Interacts with KCNK3 and KCNK9, forming functional heterodimeric channels. Interacts with GNG4. Identified in a complex with PSD and ARF6; interacts only with PSD that is bound to ARF6. Interacts with UBE2I. Sumoylation is controversial. Sumoylated by UBE2I. Not sumoylated when expressed in xenopus oocytes or mammalian cells. Sumoylation inactivates the channel, but does not interfere with expression at the cell membrane. Sumoylation of a single subunit is sufficient to silence the dimeric channel. Sumoylation of KCNK1 is sufficient to silence heterodimeric channels formed by KCNK1 and KCNK3 or KCNK9. Desumoylated by SENP1; this activates the channel. Desumoylated by SENP1; this strongly increases halothane-mediated activation of heterodimeric channels formed with KCNK9. SENP1 treatment has no effect. In terms of tissue distribution, detected in bronchial epithelial cells. Detected in heart left atrium and left ventricle. Detected in cardiac myocytes (at protein level). Widely expressed with high levels in heart, brain and kidney, and lower levels in colon, ovary, placenta, lung and liver. Highly expressed in cerebellum, and detected at lower levels in amygdala, caudate nucleus, brain cortex, hippocampus, putamen, substantia nigra, thalamus, dorsal root ganglion, spinal cord, pituitary, heart, kidney, lung, placenta, pancreas, stomach, small intestine, uterus and prostate. Detected in right and left heart ventricle and atrium, and in heart Purkinje fibers.

It localises to the cell membrane. The protein localises to the recycling endosome. The protein resides in the synaptic cell membrane. Its subcellular location is the cytoplasmic vesicle. It is found in the perikaryon. It localises to the cell projection. The protein localises to the dendrite. The protein resides in the apical cell membrane. It catalyses the reaction K(+)(in) = K(+)(out). It carries out the reaction NH4(+)(in) = NH4(+)(out). The catalysed reaction is Na(+)(in) = Na(+)(out). The enzyme catalyses Rb(+)(in) = Rb(+)(out). It catalyses the reaction Cs(+)(in) = Cs(+)(out). It carries out the reaction Li(+)(in) = Li(+)(out). The catalysed reaction is L-glutamate(out) = L-glutamate(in). The enzyme catalyses chloride(in) = chloride(out). Inhibited by Ba(2+) ions and quinidine. Inhibited by quinine. Is slightly inhibited by 10 mM tetraethylammonium (TEA), and only marginally inhibited by 4-aminopyridine, charybdotoxin and dendrotoxin. Lowering the extracellular pH to below 6.5 transiently activates the channel, and then inhibits channel activity. Inhibited when the intracellular pH is decreased down to pH 6.0, but this may be due to indirect effects. Its function is as follows. Ion channel that contributes to passive transmembrane potassium transport and to the regulation of the resting membrane potential in brain astrocytes, but also in kidney and in other tissues. Forms dimeric channels through which potassium ions pass in accordance with their electrochemical gradient. The channel is selective for K(+) ions at physiological potassium concentrations and at neutral pH, but becomes permeable to Na(+) at subphysiological K(+) levels and upon acidification of the extracellular medium. The homodimer has very low potassium channel activity, when expressed in heterologous systems, and can function as weakly inward rectifying potassium channel. Channel activity is modulated by activation of serotonin receptors. Heterodimeric channels containing KCNK1 and KCNK2 have much higher activity, and may represent the predominant form in astrocytes. Heterodimeric channels containing KCNK1 and KCNK3 or KCNK9 have much higher activity. Heterodimeric channels formed by KCNK1 and KCNK9 may contribute to halothane-sensitive currents. Mediates outward rectifying potassium currents in dentate gyrus granule cells and contributes to the regulation of their resting membrane potential. Contributes to the regulation of action potential firing in dentate gyrus granule cells and down-regulates their intrinsic excitability. In astrocytes, the heterodimer formed by KCNK1 and KCNK2 is required for rapid glutamate release in response to activation of G-protein coupled receptors, such as F2R and CNR1. Required for normal ion and water transport in the kidney. Contributes to the regulation of the resting membrane potential of pancreatic beta cells. The low channel activity of homodimeric KCNK1 may be due to sumoylation. The low channel activity may be due to rapid internalization from the cell membrane and retention in recycling endosomes. Permeable to monovalent cations with ion selectivity for K(+) &gt; Rb(+) &gt;&gt; NH4(+) &gt;&gt; Cs(+) = Na(+) = Li(+). The chain is Potassium channel subfamily K member 1 (KCNK1) from Homo sapiens (Human).